The primary structure comprises 143 residues: Large ribosomal subunit protein uL15 (143 aa).

The disordered stretch occupies residues 1–52; the sequence is MKLNTLAPAAGSKSAPKRLGRGIGSGLGKTSGKGHKGQKARSGGYHKVGFEG. Gly residues predominate over residues 21-31; that stretch reads RGIGSGLGKTS.

Belongs to the universal ribosomal protein uL15 family. As to quaternary structure, part of the 50S ribosomal subunit.

Its function is as follows. Binds to the 23S rRNA. The chain is Large ribosomal subunit protein uL15 from Francisella tularensis subsp. novicida (strain U112).